The following is a 44-amino-acid chain: Large ribosomal subunit protein bL34 (44 aa).

It belongs to the bacterial ribosomal protein bL34 family.

The sequence is that of Large ribosomal subunit protein bL34 from Wolbachia sp. subsp. Brugia malayi (strain TRS).